The following is a 78-amino-acid chain: Small ribosomal subunit protein bS18 (78 aa).

It belongs to the bacterial ribosomal protein bS18 family. As to quaternary structure, part of the 30S ribosomal subunit. Forms a tight heterodimer with protein bS6.

Its function is as follows. Binds as a heterodimer with protein bS6 to the central domain of the 16S rRNA, where it helps stabilize the platform of the 30S subunit. The protein is Small ribosomal subunit protein bS18 of Geobacillus kaustophilus (strain HTA426).